The chain runs to 304 residues: Ferredoxin fas2 (304 aa).

One can recognise a 4Fe-4S ferredoxin-type domain in the interval 2–29 (KVVVNERRCFGSGQCVLVAPEVFEQSND). Positions 10, 16, and 54 each coordinate [3Fe-4S] cluster. The transketolase-like stretch occupies residues 66–304 (MRQEPTEFSY…QSARSSIQQR (239 aa)).

This sequence in the C-terminal section; belongs to the transketolase family. Requires [3Fe-4S] cluster as cofactor.

Plays a role in electron transfer. The fas operon encodes genes involved in cytokinin production and in host plant fasciation (leafy gall). The polypeptide is Ferredoxin fas2 (fas2) (Rhodococcoides fascians (Rhodococcus fascians)).